The following is a 439-amino-acid chain: Xylose isomerase (439 aa).

Active-site residues include His-101 and Asp-104. Mg(2+) contacts are provided by Glu-232, Glu-268, His-271, Asp-296, Asp-307, Asp-309, and Asp-339.

This sequence belongs to the xylose isomerase family. Homotetramer. Mg(2+) serves as cofactor.

Its subcellular location is the cytoplasm. The catalysed reaction is alpha-D-xylose = alpha-D-xylulofuranose. The polypeptide is Xylose isomerase (Haemophilus influenzae (strain PittGG)).